We begin with the raw amino-acid sequence, 314 residues long: tRNA dimethylallyltransferase (314 aa).

16-23 (GPTGVGKT) is an ATP binding site. Substrate is bound at residue 18-23 (TGVGKT). The tract at residues 41 to 44 (DSMQ) is interaction with substrate tRNA.

This sequence belongs to the IPP transferase family. Monomer. The cofactor is Mg(2+).

The enzyme catalyses adenosine(37) in tRNA + dimethylallyl diphosphate = N(6)-dimethylallyladenosine(37) in tRNA + diphosphate. In terms of biological role, catalyzes the transfer of a dimethylallyl group onto the adenine at position 37 in tRNAs that read codons beginning with uridine, leading to the formation of N6-(dimethylallyl)adenosine (i(6)A). In Desulfosudis oleivorans (strain DSM 6200 / JCM 39069 / Hxd3) (Desulfococcus oleovorans), this protein is tRNA dimethylallyltransferase.